We begin with the raw amino-acid sequence, 203 residues long: Endo-type membrane-bound lytic murein transglycosylase A (203 aa).

The signal sequence occupies residues 1-15 (MKLRWFAFLIVLLAG). The N-palmitoyl cysteine moiety is linked to residue C16. The S-diacylglycerol cysteine moiety is linked to residue C16.

The protein belongs to the transglycosylase Slt family.

The protein resides in the cell outer membrane. It catalyses the reaction Endolytic cleavage of the (1-&gt;4)-beta-glycosidic linkage between N-acetylmuramic acid (MurNAc) and N-acetylglucosamine (GlcNAc) residues in peptidoglycan with concomitant formation of a 1,6-anhydrobond in the MurNAc residue.. Its function is as follows. Murein-degrading enzyme. May play a role in recycling of muropeptides during cell elongation and/or cell division. Preferentially cleaves at a distance of more than two disaccharide units from the ends of the glycan chain. In Escherichia coli O127:H6 (strain E2348/69 / EPEC), this protein is Endo-type membrane-bound lytic murein transglycosylase A.